A 781-amino-acid chain; its full sequence is Cation channel sperm-associated auxiliary subunit delta (781 aa).

An N-terminal signal peptide occupies residues 1-20 (MLVLMLVVATTFRLCPLVKA). Topologically, residues 21 to 725 (RPLCRIRTLR…YGAFPLSIFP (705 aa)) are extracellular. Cystine bridges form between cysteine 24-cysteine 370, cysteine 60-cysteine 146, cysteine 145-cysteine 153, cysteine 388-cysteine 497, cysteine 511-cysteine 705, cysteine 526-cysteine 573, and cysteine 625-cysteine 655. Residues asparagine 231, asparagine 294, asparagine 458, asparagine 473, asparagine 539, and asparagine 631 are each glycosylated (N-linked (GlcNAc...) asparagine). Residues 726–749 (PEITIVLLTAATLLSIWLAYMIPQ) form a helical membrane-spanning segment. Residues 750 to 781 (LLHTEQGLEGNGFWVRLYQRCRKSCACLWGRC) are Cytoplasmic-facing.

This sequence belongs to the CATSPERD family. In terms of assembly, component of the CatSper complex or CatSpermasome composed of the core pore-forming members CATSPER1, CATSPER2, CATSPER3 and CATSPER4 as well as auxiliary members CATSPERB, CATSPERG, CATSPERD, CATSPERE, CATSPERZ, C2CD6/CATSPERT, TMEM249, TMEM262 and EFCAB9. HSPA1 may be an additional auxiliary complex member. The core complex members CATSPER1, CATSPER2, CATSPER3 and CATSPER4 form a heterotetrameric channel. The auxiliary CATSPERB, CATSPERG, CATSPERD and CATSPERE subunits form a pavilion-like structure over the pore which stabilizes the complex through interactions with CATSPER4, CATSPER3, CATSPER1 and CATSPER2 respectively. TMEM262/CATSPERH interacts with CATSPERB, further stabilizing the complex. C2CD6/CATSPERT interacts at least with CATSPERD and is required for targeting the CatSper complex in the flagellar membrane.

The protein localises to the cell projection. It localises to the cilium. It is found in the flagellum membrane. Its function is as follows. Auxiliary component of the CatSper complex, a complex involved in sperm cell hyperactivation. Sperm cell hyperactivation is needed for sperm motility which is essential late in the preparation of sperm for fertilization. Required for CATSPER1 stability before intraflagellar transport and/or incorporation of the CatSper complex channel into the flagellar membrane. The sequence is that of Cation channel sperm-associated auxiliary subunit delta from Bos taurus (Bovine).